We begin with the raw amino-acid sequence, 876 residues long: Alanine--tRNA ligase (876 aa).

Zn(2+)-binding residues include His566, His570, Cys667, and His671.

It belongs to the class-II aminoacyl-tRNA synthetase family. It depends on Zn(2+) as a cofactor.

Its subcellular location is the cytoplasm. The catalysed reaction is tRNA(Ala) + L-alanine + ATP = L-alanyl-tRNA(Ala) + AMP + diphosphate. In terms of biological role, catalyzes the attachment of alanine to tRNA(Ala) in a two-step reaction: alanine is first activated by ATP to form Ala-AMP and then transferred to the acceptor end of tRNA(Ala). Also edits incorrectly charged Ser-tRNA(Ala) and Gly-tRNA(Ala) via its editing domain. This chain is Alanine--tRNA ligase, found in Albidiferax ferrireducens (strain ATCC BAA-621 / DSM 15236 / T118) (Rhodoferax ferrireducens).